We begin with the raw amino-acid sequence, 63 residues long: Beta-defensin 4 (63 aa).

Residues 1–22 (MRIHYLLFSFLLVLLSPLSAFT) form the signal peptide. Residue Gln-23 is modified to Pyrrolidone carboxylic acid. Disulfide bonds link Cys-31–Cys-59, Cys-38–Cys-52, and Cys-42–Cys-60.

The protein belongs to the beta-defensin family. Highly expressed in lung.

The protein resides in the secreted. Its function is as follows. Exhibits antimicrobial activity against Gram-negative bacteria and Gram-positive bacteria. May act as a ligand for C-C chemokine receptor CCR6. Binds to CCR6 and induces chemotactic activity of CCR6-expressing cells. In Rattus norvegicus (Rat), this protein is Beta-defensin 4 (Defb4).